Reading from the N-terminus, the 499-residue chain is Cytochrome P450 monooxygenase notH' (499 aa).

Residues 11–31 (LGLEPAGWALALLTSSIIYLF) traverse the membrane as a helical segment. 2 N-linked (GlcNAc...) asparagine glycosylation sites follow: Asn-296 and Asn-427. Cys-440 is a heme binding site.

This sequence belongs to the cytochrome P450 family. Heme serves as cofactor.

Its subcellular location is the membrane. Its pathway is alkaloid biosynthesis. In terms of biological role, cytochrome P450 monooxygenase; part of the gene cluster that mediates the biosynthesis of notoamide, a fungal indole alkaloid that belongs to a family of natural products containing a characteristic bicyclo[2.2.2]diazaoctane core. The first step of notoamide biosynthesis involves coupling of L-proline and L-tryptophan by the bimodular NRPS notE', to produce cyclo-L-tryptophan-L-proline called brevianamide F. The reverse prenyltransferase notF' then acts as a deoxybrevianamide E synthase and converts brevianamide F to deoxybrevianamide E via reverse prenylation at C-2 of the indole ring leading to the bicyclo[2.2.2]diazaoctane core. Deoxybrevianamide E is further hydroxylated at C-6 of the indole ring, likely catalyzed by the cytochrome P450 monooxygenase notG', to yield 6-hydroxy-deoxybrevianamide E. 6-hydroxy-deoxybrevianamide E is a specific substrate of the prenyltransferase notC' for normal prenylation at C-7 to produce 6-hydroxy-7-prenyl-deoxybrevianamide, also called notoamide S. As the proposed pivotal branching point in notoamide biosynthesis, notoamide S can be diverted to notoamide E through an oxidative pyran ring closure putatively catalyzed by either notH' cytochrome P450 monooxygenase or the notD' FAD-linked oxidoreductase. This step would be followed by an indole 2,3-epoxidation-initiated pinacol-like rearrangement catalyzed by the notB' FAD-dependent monooxygenase leading to the formation of notoamide C and notoamide D. On the other hand notoamide S is converted to notoamide T by notH' (or notD'), a bifunctional oxidase that also functions as the intramolecular Diels-Alderase responsible for generation of (-)-notoamide T. To generate antipodal (+)-notoaminide T, notH (or notD) in Aspergillus strain MF297-2 is expected to catalyze a Diels-Alder reaction leading to the opposite stereochemistry. The remaining oxidoreductase notD' (or notH') likely catalyzes the oxidative pyran ring formation to yield (-)-stephacidin A. The FAD-dependent monooxygenase notI' is highly similar to notB' and is predicted to catalyze a similar conversion from (-)-stephacidin A to (+)-notoamide B via the 2,3-epoxidation of (-)-stephacidin A followed by a pinacol-type rearrangement. Finally, it remains unclear which enzyme could be responsible for the final hydroxylation steps leading to notoamide A and sclerotiamide. The protein is Cytochrome P450 monooxygenase notH' of Aspergillus versicolor.